The following is a 131-amino-acid chain: D-ribose pyranase (131 aa).

His20 serves as the catalytic Proton donor. Substrate contacts are provided by residues Asp28, His98, and 120–122; that span reads FSN.

This sequence belongs to the RbsD / FucU family. RbsD subfamily. Homodecamer.

It is found in the cytoplasm. The catalysed reaction is beta-D-ribopyranose = beta-D-ribofuranose. Its pathway is carbohydrate metabolism; D-ribose degradation; D-ribose 5-phosphate from beta-D-ribopyranose: step 1/2. Its function is as follows. Catalyzes the interconversion of beta-pyran and beta-furan forms of D-ribose. This Oenococcus oeni (strain ATCC BAA-331 / PSU-1) protein is D-ribose pyranase.